Reading from the N-terminus, the 400-residue chain is Dual specificity mitogen-activated protein kinase kinase 2 (400 aa).

Residue Met-1 is modified to N-acetylmethionine. Ser-23 bears the Phosphoserine mark. One can recognise a Protein kinase domain in the interval 72-369; the sequence is FERISELGAG…LKMLMSHTFI (298 aa). ATP-binding positions include 78–86 and Lys-101; that span reads LGAGNGGVV. Asp-194 acts as the Proton acceptor in catalysis. Ser-222 bears the Phosphoserine; by RAF mark. A phosphoserine mark is found at Ser-226, Ser-293, Ser-295, and Ser-306. Residues 288–309 form a disordered region; the sequence is EGEPHSISPRPRPPGRPISGHG. 2 positions are modified to phosphothreonine: Thr-394 and Thr-396.

Belongs to the protein kinase superfamily. STE Ser/Thr protein kinase family. MAP kinase kinase subfamily. Interacts with MORG1. Interacts with SGK1. Interacts with KSR1. Interacts with KSR1 and BRAF; the interaction with KSR1 mediates KSR1-BRAF dimerization. Interacts with GLS. Mg(2+) serves as cofactor. In terms of processing, MAPKK is itself dependent on Ser/Thr phosphorylation for activity catalyzed by MAP kinase kinase kinases (RAF or MEKK1).

It localises to the cytoplasm. Its subcellular location is the membrane. It carries out the reaction L-seryl-[protein] + ATP = O-phospho-L-seryl-[protein] + ADP + H(+). The catalysed reaction is L-threonyl-[protein] + ATP = O-phospho-L-threonyl-[protein] + ADP + H(+). It catalyses the reaction L-tyrosyl-[protein] + ATP = O-phospho-L-tyrosyl-[protein] + ADP + H(+). In terms of biological role, catalyzes the concomitant phosphorylation of a threonine and a tyrosine residue in a Thr-Glu-Tyr sequence located in MAP kinases. Activates the ERK1 and ERK2 MAP kinases. Activates BRAF in a KSR1 or KSR2-dependent manner; by binding to KSR1 or KSR2 releases the inhibitory intramolecular interaction between KSR1 or KSR2 protein kinase and N-terminal domains which promotes KSR1 or KSR2-BRAF dimerization and BRAF activation. The polypeptide is Dual specificity mitogen-activated protein kinase kinase 2 (MAP2K2) (Canis lupus familiaris (Dog)).